A 565-amino-acid chain; its full sequence is MQAFVQFLGSNPYILLFLTIGLAVWVGKFSIKGYGLGAVAAAIVVGCLVATVGAAYGVKFHLDEFAKSLLYYLFMYGVGLRVGPSFVNALNKESINYAILAIIAPILGLAIVVLGTQFFGLPLGAAGGMLAGSQTMSAAIGSAEQAVSAGVLSLGSESPEQISAMIALSYGITYIWGTVGIILLCKYLPRIWGVDAKAAALEFEKAHGVPNVDDAGLTAFHPFDLRAYRVENPESIGKTVQQFRTRFPQYQVVNVERGDQLLGPSAETVLQQGDVVALGGRLEEMTANMGMLGPEVPDARALNIPLDQAEILVTNKEVTGRPLKTFRGSELAGQIQLQRVERSGVPLPIGLETTLQKRDVLFVTGLQPAVSKAGEIFGVIARHSSATDLLTLSFGMILGFLIGLIEVPAFGAKVGLGNAGGLLLSGIIVSSISSRLRFFGNTPNAARNILEDLGLIGFVAIVGINAGADLLTQLTGAIALKIFIVGFLASTIPPIIVWAIGFHIMKINPALLMGATAGARSHSGPAREAAKEVGSSVPWLGFPVGYAVSGVLLTVFGYFAMVLAH.

Helical transmembrane passes span 4-26 (FVQFLGSNPYILLFLTIGLAVWV), 33-55 (GYGLGAVAAAIVVGCLVATVGAA), 68-90 (SLLYYLFMYGVGLRVGPSFVNAL), 97-119 (YAILAIIAPILGLAIVVLGTQFF), and 162-184 (ISAMIALSYGITYIWGTVGIILL). RCK C-terminal domains follow at residues 210–295 (PNVD…LGPE) and 296–379 (VPDA…IFGV). Helical transmembrane passes span 389-411 (LLTLSFGMILGFLIGLIEVPAFG), 415-432 (GLGNAGGLLLSGIIVSSI), 453-472 (LGLIGFVAIVGINAGADLLT), 482-504 (IFIVGFLASTIPPIIVWAIGFHI), and 539-561 (WLGFPVGYAVSGVLLTVFGYFAM).

Belongs to the AAE transporter (TC 2.A.81) family.

It is found in the cell membrane. This is an uncharacterized protein from Bordetella parapertussis (strain 12822 / ATCC BAA-587 / NCTC 13253).